The chain runs to 39 residues: Cygnin (39 aa).

A Pyrrolidone carboxylic acid modification is found at Gln1. 3 cysteine pairs are disulfide-bonded: Cys6/Cys33, Cys12/Cys28, and Cys16/Cys32.

This sequence belongs to the transferrin family.

The chain is Cygnin from Cygnus atratus (Black swan).